A 307-amino-acid polypeptide reads, in one-letter code: Acetaldehyde dehydrogenase (307 aa).

12–15 (SGNI) serves as a coordination point for NAD(+). The active-site Acyl-thioester intermediate is cysteine 130. NAD(+) is bound by residues 161–169 (SVGPGTRQN) and asparagine 272.

This sequence belongs to the acetaldehyde dehydrogenase family.

The enzyme catalyses acetaldehyde + NAD(+) + CoA = acetyl-CoA + NADH + H(+). This is Acetaldehyde dehydrogenase from Shewanella pealeana (strain ATCC 700345 / ANG-SQ1).